The chain runs to 357 residues: U3 small nucleolar ribonucleoprotein protein LCP5 (357 aa).

Serine 2 is subject to N-acetylserine. 2 disordered regions span residues 146–211 (STLV…YKPP) and 301–357 (NKAE…QRRL). Over residues 155–166 (DDSEDDESSEDE) the composition is skewed to acidic residues. The span at 171–183 (PNTSGIINTNKKS) shows a compositional bias: polar residues. 2 stretches are compositionally biased toward basic and acidic residues: residues 187-196 (RVEETAKQEN) and 348-357 (SAWDRAQRRL).

Its subcellular location is the nucleus. It localises to the nucleolus. Functionally, component of the U3 small nucleolar ribonucleoprotein. Required for the early cleavages at sites A0, A1 and A2 of the pre-ribosomal RNA. Participates in ribosome biogenesis. This chain is U3 small nucleolar ribonucleoprotein protein LCP5 (LCP5), found in Saccharomyces cerevisiae (strain ATCC 204508 / S288c) (Baker's yeast).